A 94-amino-acid chain; its full sequence is Pyrimidine/purine nucleoside phosphorylase (94 aa).

This sequence belongs to the nucleoside phosphorylase PpnP family.

It catalyses the reaction a purine D-ribonucleoside + phosphate = a purine nucleobase + alpha-D-ribose 1-phosphate. It carries out the reaction adenosine + phosphate = alpha-D-ribose 1-phosphate + adenine. The enzyme catalyses cytidine + phosphate = cytosine + alpha-D-ribose 1-phosphate. The catalysed reaction is guanosine + phosphate = alpha-D-ribose 1-phosphate + guanine. It catalyses the reaction inosine + phosphate = alpha-D-ribose 1-phosphate + hypoxanthine. It carries out the reaction thymidine + phosphate = 2-deoxy-alpha-D-ribose 1-phosphate + thymine. The enzyme catalyses uridine + phosphate = alpha-D-ribose 1-phosphate + uracil. The catalysed reaction is xanthosine + phosphate = alpha-D-ribose 1-phosphate + xanthine. In terms of biological role, catalyzes the phosphorolysis of diverse nucleosides, yielding D-ribose 1-phosphate and the respective free bases. Can use uridine, adenosine, guanosine, cytidine, thymidine, inosine and xanthosine as substrates. Also catalyzes the reverse reactions. The protein is Pyrimidine/purine nucleoside phosphorylase of Pseudomonas fluorescens (strain ATCC BAA-477 / NRRL B-23932 / Pf-5).